A 398-amino-acid chain; its full sequence is 4-hydroxy-3-methylbut-2-enyl diphosphate reductase (398 aa).

Cysteine 66 lines the [4Fe-4S] cluster pocket. Position 96 (histidine 96) interacts with (2E)-4-hydroxy-3-methylbut-2-enyl diphosphate. Histidine 96 is a dimethylallyl diphosphate binding site. Isopentenyl diphosphate is bound at residue histidine 96. Cysteine 157 serves as a coordination point for [4Fe-4S] cluster. Position 185 (histidine 185) interacts with (2E)-4-hydroxy-3-methylbut-2-enyl diphosphate. Histidine 185 provides a ligand contact to dimethylallyl diphosphate. Histidine 185 is an isopentenyl diphosphate binding site. Residue glutamate 187 is the Proton donor of the active site. Threonine 250 is a (2E)-4-hydroxy-3-methylbut-2-enyl diphosphate binding site. Cysteine 288 is a [4Fe-4S] cluster binding site. (2E)-4-hydroxy-3-methylbut-2-enyl diphosphate contacts are provided by serine 317, serine 318, asparagine 319, and serine 379. Dimethylallyl diphosphate is bound by residues serine 317, serine 318, asparagine 319, and serine 379. Isopentenyl diphosphate is bound by residues serine 317, serine 318, asparagine 319, and serine 379.

Belongs to the IspH family. It depends on [4Fe-4S] cluster as a cofactor.

It carries out the reaction isopentenyl diphosphate + 2 oxidized [2Fe-2S]-[ferredoxin] + H2O = (2E)-4-hydroxy-3-methylbut-2-enyl diphosphate + 2 reduced [2Fe-2S]-[ferredoxin] + 2 H(+). It catalyses the reaction dimethylallyl diphosphate + 2 oxidized [2Fe-2S]-[ferredoxin] + H2O = (2E)-4-hydroxy-3-methylbut-2-enyl diphosphate + 2 reduced [2Fe-2S]-[ferredoxin] + 2 H(+). The protein operates within isoprenoid biosynthesis; dimethylallyl diphosphate biosynthesis; dimethylallyl diphosphate from (2E)-4-hydroxy-3-methylbutenyl diphosphate: step 1/1. It functions in the pathway isoprenoid biosynthesis; isopentenyl diphosphate biosynthesis via DXP pathway; isopentenyl diphosphate from 1-deoxy-D-xylulose 5-phosphate: step 6/6. Its function is as follows. Catalyzes the conversion of 1-hydroxy-2-methyl-2-(E)-butenyl 4-diphosphate (HMBPP) into a mixture of isopentenyl diphosphate (IPP) and dimethylallyl diphosphate (DMAPP). Acts in the terminal step of the DOXP/MEP pathway for isoprenoid precursor biosynthesis. The polypeptide is 4-hydroxy-3-methylbut-2-enyl diphosphate reductase (Synechococcus sp. (strain CC9311)).